A 992-amino-acid chain; its full sequence is Translation initiation factor IF-2 (992 aa).

Disordered stretches follow at residues 154–173 (RRLR…EREA) and 338–399 (AAPG…RPES). The region spanning 492–661 (PRAPVVTVMG…LLQAEVLELK (170 aa)) is the tr-type G domain. Residues 501–508 (GHVDHGKT) form a G1 region. Residue 501 to 508 (GHVDHGKT) coordinates GTP. The interval 526-530 (GITQH) is G2. Residues 547-550 (DTPG) are G3. GTP-binding positions include 547 to 551 (DTPGH) and 601 to 604 (NKID). A G4 region spans residues 601 to 604 (NKID). The segment at 637–639 (SAH) is G5.

Belongs to the TRAFAC class translation factor GTPase superfamily. Classic translation factor GTPase family. IF-2 subfamily.

It is found in the cytoplasm. One of the essential components for the initiation of protein synthesis. Protects formylmethionyl-tRNA from spontaneous hydrolysis and promotes its binding to the 30S ribosomal subunits. Also involved in the hydrolysis of GTP during the formation of the 70S ribosomal complex. The chain is Translation initiation factor IF-2 from Polaromonas naphthalenivorans (strain CJ2).